Consider the following 232-residue polypeptide: Large ribosomal subunit protein uL1 (232 aa).

It belongs to the universal ribosomal protein uL1 family. In terms of assembly, part of the 50S ribosomal subunit.

Functionally, binds directly to 23S rRNA. The L1 stalk is quite mobile in the ribosome, and is involved in E site tRNA release. Its function is as follows. Protein L1 is also a translational repressor protein, it controls the translation of the L11 operon by binding to its mRNA. The polypeptide is Large ribosomal subunit protein uL1 (Xanthobacter autotrophicus (strain ATCC BAA-1158 / Py2)).